Consider the following 507-residue polypeptide: Probable DNA ligase (507 aa).

Glutamate 209 contacts ATP. The active-site N6-AMP-lysine intermediate is the lysine 211. Positions 216, 231, 260, 295, 366, and 372 each coordinate ATP.

Belongs to the ATP-dependent DNA ligase family. Mg(2+) is required as a cofactor.

It catalyses the reaction ATP + (deoxyribonucleotide)n-3'-hydroxyl + 5'-phospho-(deoxyribonucleotide)m = (deoxyribonucleotide)n+m + AMP + diphosphate.. Functionally, DNA ligase that seals nicks in double-stranded DNA during DNA replication, DNA recombination and DNA repair. In Pseudarthrobacter chlorophenolicus (strain ATCC 700700 / DSM 12829 / CIP 107037 / JCM 12360 / KCTC 9906 / NCIMB 13794 / A6) (Arthrobacter chlorophenolicus), this protein is Probable DNA ligase.